The sequence spans 314 residues: Probable cell division protein WhiA (314 aa).

Residues 274–308 constitute a DNA-binding region (H-T-H motif); sequence SLKELGEMVSTGPISKSGMNHRLRKLNELADKIRN.

This sequence belongs to the WhiA family.

Involved in cell division and chromosome segregation. This is Probable cell division protein WhiA from Staphylococcus epidermidis (strain ATCC 35984 / DSM 28319 / BCRC 17069 / CCUG 31568 / BM 3577 / RP62A).